Here is a 159-residue protein sequence, read N- to C-terminus: NAD(P)H-quinone oxidoreductase subunit J, chloroplastic (159 aa).

The protein belongs to the complex I 30 kDa subunit family. NDH is composed of at least 16 different subunits, 5 of which are encoded in the nucleus.

It localises to the plastid. Its subcellular location is the chloroplast thylakoid membrane. It catalyses the reaction a plastoquinone + NADH + (n+1) H(+)(in) = a plastoquinol + NAD(+) + n H(+)(out). It carries out the reaction a plastoquinone + NADPH + (n+1) H(+)(in) = a plastoquinol + NADP(+) + n H(+)(out). NDH shuttles electrons from NAD(P)H:plastoquinone, via FMN and iron-sulfur (Fe-S) centers, to quinones in the photosynthetic chain and possibly in a chloroplast respiratory chain. The immediate electron acceptor for the enzyme in this species is believed to be plastoquinone. Couples the redox reaction to proton translocation, and thus conserves the redox energy in a proton gradient. This chain is NAD(P)H-quinone oxidoreductase subunit J, chloroplastic, found in Triticum aestivum (Wheat).